A 119-amino-acid polypeptide reads, in one-letter code: Holo-[acyl-carrier-protein] synthase (119 aa).

2 residues coordinate Mg(2+): aspartate 8 and glutamate 59.

This sequence belongs to the P-Pant transferase superfamily. AcpS family. The cofactor is Mg(2+).

It is found in the cytoplasm. The enzyme catalyses apo-[ACP] + CoA = holo-[ACP] + adenosine 3',5'-bisphosphate + H(+). Functionally, transfers the 4'-phosphopantetheine moiety from coenzyme A to a Ser of acyl-carrier-protein. This Staphylococcus aureus (strain USA300) protein is Holo-[acyl-carrier-protein] synthase.